We begin with the raw amino-acid sequence, 63 residues long: Keratin-associated protein 19-8 (63 aa).

The protein belongs to the KRTAP type 19 family. As to quaternary structure, interacts with hair keratins.

Its function is as follows. In the hair cortex, hair keratin intermediate filaments are embedded in an interfilamentous matrix, consisting of hair keratin-associated proteins (KRTAP), which are essential for the formation of a rigid and resistant hair shaft through their extensive disulfide bond cross-linking with abundant cysteine residues of hair keratins. The matrix proteins include the high-sulfur and high-glycine-tyrosine keratins. In Homo sapiens (Human), this protein is Keratin-associated protein 19-8 (KRTAP19-8).